The sequence spans 121 residues: Small ribosomal subunit protein uS13 (121 aa).

Residues 94-121 (GLPVRGQNTKNNARTRKGPRRTVANKKK) are disordered. A compositionally biased stretch (basic residues) spans 106-121 (ARTRKGPRRTVANKKK).

This sequence belongs to the universal ribosomal protein uS13 family. In terms of assembly, part of the 30S ribosomal subunit. Forms a loose heterodimer with protein S19. Forms two bridges to the 50S subunit in the 70S ribosome.

Its function is as follows. Located at the top of the head of the 30S subunit, it contacts several helices of the 16S rRNA. In the 70S ribosome it contacts the 23S rRNA (bridge B1a) and protein L5 of the 50S subunit (bridge B1b), connecting the 2 subunits; these bridges are implicated in subunit movement. Contacts the tRNAs in the A and P-sites. This Geobacillus kaustophilus (strain HTA426) protein is Small ribosomal subunit protein uS13.